We begin with the raw amino-acid sequence, 206 residues long: Acireductone dioxygenase (206 aa).

Positions 102, 104, 108, and 146 each coordinate Fe(2+). Histidine 102, histidine 104, glutamate 108, and histidine 146 together coordinate Ni(2+).

This sequence belongs to the acireductone dioxygenase (ARD) family. Monomer. Fe(2+) is required as a cofactor. The cofactor is Ni(2+).

The enzyme catalyses 1,2-dihydroxy-5-(methylsulfanyl)pent-1-en-3-one + O2 = 3-(methylsulfanyl)propanoate + CO + formate + 2 H(+). It carries out the reaction 1,2-dihydroxy-5-(methylsulfanyl)pent-1-en-3-one + O2 = 4-methylsulfanyl-2-oxobutanoate + formate + 2 H(+). It participates in amino-acid biosynthesis; L-methionine biosynthesis via salvage pathway; L-methionine from S-methyl-5-thio-alpha-D-ribose 1-phosphate: step 5/6. Its function is as follows. Catalyzes 2 different reactions between oxygen and the acireductone 1,2-dihydroxy-3-keto-5-methylthiopentene (DHK-MTPene) depending upon the metal bound in the active site. Fe-containing acireductone dioxygenase (Fe-ARD) produces formate and 2-keto-4-methylthiobutyrate (KMTB), the alpha-ketoacid precursor of methionine in the methionine recycle pathway. Ni-containing acireductone dioxygenase (Ni-ARD) produces methylthiopropionate, carbon monoxide and formate, and does not lie on the methionine recycle pathway. The polypeptide is Acireductone dioxygenase (Frankia alni (strain DSM 45986 / CECT 9034 / ACN14a)).